The following is a 435-amino-acid chain: MKTFSLLRILIVLVGMAGAFATPAMALVEININKGNVEPMPIAIPDFLSANGIGAKISAVVEADLKRSGLFAPVNHGAFIDKQINPDQAPNMQNWTVLNAQALVVGRITQEGDGRLRAEFRLWDTYAGQQMSGQQFYTQPENWRRVAHIIADAIYERITGEKGYFDTRIVFVAESGTKTDRKRQLAIMDQDGENVRMLTNTANLVLTPRFSPNRQEVTYMSFEGNQPRVYLLQLETGQREVVGNFPGMTFSPRFSPDGQRVIMSLQQDANSNIYTMDLRSRTTTRLTSTAAIDTSPSYAPDGRRIVFESDRGGRQQLYVMNSDGSGQTRISFGEGSYSTPVWSPRGDLIAFTKQSGGKFSIGVMKPDGSGERLLTTGFHNEGPTWAPNGRVLMFFRQAAGSGGPQLYSIDLTGYNEQLVKTPSFASDPAWSPLLE.

The first 26 residues, 1 to 26, serve as a signal peptide directing secretion; sequence MKTFSLLRILIVLVGMAGAFATPAMA.

The protein belongs to the TolB family. As to quaternary structure, the Tol-Pal system is composed of five core proteins: the inner membrane proteins TolA, TolQ and TolR, the periplasmic protein TolB and the outer membrane protein Pal. They form a network linking the inner and outer membranes and the peptidoglycan layer.

It localises to the periplasm. Part of the Tol-Pal system, which plays a role in outer membrane invagination during cell division and is important for maintaining outer membrane integrity. The sequence is that of Tol-Pal system protein TolB from Allorhizobium ampelinum (strain ATCC BAA-846 / DSM 112012 / S4) (Agrobacterium vitis (strain S4)).